Consider the following 434-residue polypeptide: Histidinol dehydrogenase (434 aa).

NAD(+) is bound by residues Tyr-130, Gln-188, and Asn-211. Positions 237, 259, and 262 each coordinate substrate. Zn(2+) contacts are provided by Gln-259 and His-262. Catalysis depends on proton acceptor residues Glu-326 and His-327. Residues His-327, Asp-360, Glu-414, and His-419 each coordinate substrate. Zn(2+) is bound at residue Asp-360. His-419 contributes to the Zn(2+) binding site.

It belongs to the histidinol dehydrogenase family. Homodimer. Zn(2+) is required as a cofactor.

The catalysed reaction is L-histidinol + 2 NAD(+) + H2O = L-histidine + 2 NADH + 3 H(+). Its pathway is amino-acid biosynthesis; L-histidine biosynthesis; L-histidine from 5-phospho-alpha-D-ribose 1-diphosphate: step 9/9. Catalyzes the sequential NAD-dependent oxidations of L-histidinol to L-histidinaldehyde and then to L-histidine. This chain is Histidinol dehydrogenase, found in Shigella boydii serotype 4 (strain Sb227).